We begin with the raw amino-acid sequence, 58 residues long: Cecropin-A (58 aa).

Residues 1 to 23 (MNFSKIFIFVVLAVLLLCSQTEA) form the signal peptide. A Leucine amide modification is found at L57.

This sequence belongs to the cecropin family. In terms of tissue distribution, relatively abundant in head, thorax and to a lesser extent in abdominal carcass and anterior midgut.

It localises to the secreted. Functionally, antibacterial activity against several Gram-positive and Gram-negative bacteria. Antifungal activity against A.fumigatus, B.cinerea, F.culmorum, F.oxysporum, N.crassa, C.albicans, C.neoformans and S.cerevisiae. The protein is Cecropin-A (CecA) of Anopheles gambiae (African malaria mosquito).